The sequence spans 551 residues: Endolytic murein transglycosylase (551 aa).

Over 1–187 the chain is Cytoplasmic; that stretch reads MSEKSREEEK…PKKEKKSHVK (187 aa). Positions 38-180 are disordered; it reads VRTPANEPSA…EGAKPAKPKK (143 aa). Composition is skewed to low complexity over residues 100-110 and 145-157; these read PSSPAEESGSR and QAGPETPTPATET. The span at 159–174 shows a compositional bias: basic and acidic residues; it reads DIIRDTSRRSRREGAK. A helical membrane pass occupies residues 188 to 208; that stretch reads AFVISFLVFLALLSAGGYFGY. The Extracellular segment spans residues 209–551; it reads QYVLDSLLPI…VAEHVNSKLN (343 aa).

This sequence belongs to the transglycosylase MltG family. As to quaternary structure, interacts with RodZ. Interacts with MreC in the elongasome; interaction is strongly reduced when the 90 C-terminal residues of MreC are missing. Interacts with KhpB (also called EloR/Jag) via MltG's N-terminus, suggesting the N-terminus of MltG is cytoplasmic.

It is found in the cell membrane. The catalysed reaction is a peptidoglycan chain = a peptidoglycan chain with N-acetyl-1,6-anhydromuramyl-[peptide] at the reducing end + a peptidoglycan chain with N-acetylglucosamine at the non-reducing end.. Functionally, functions as a peptidoglycan terminase that cleaves nascent peptidoglycan strands endolytically to terminate their elongation. Its function is as follows. Mutations in this gene suppress deletion of PBP2b (penA); truncation at residue 168, undefined changes between residue Ile-447 and Ala-505, and mutation of Ala-505 suppress the penA deletion. Probably part of the elongasome which synthesizes peripheral peptidoglycan. The chain is Endolytic murein transglycosylase from Streptococcus pneumoniae (strain ATCC BAA-255 / R6).